The following is a 172-amino-acid chain: Shikimate kinase (172 aa).

14–19 is a binding site for ATP; sequence GAGKST. S18 lines the Mg(2+) pocket. Substrate-binding residues include D36, R60, and G82. Position 120 (R120) interacts with ATP. R139 is a binding site for substrate. Q156 contacts ATP.

It belongs to the shikimate kinase family. As to quaternary structure, monomer. The cofactor is Mg(2+).

Its subcellular location is the cytoplasm. The catalysed reaction is shikimate + ATP = 3-phosphoshikimate + ADP + H(+). It functions in the pathway metabolic intermediate biosynthesis; chorismate biosynthesis; chorismate from D-erythrose 4-phosphate and phosphoenolpyruvate: step 5/7. Catalyzes the specific phosphorylation of the 3-hydroxyl group of shikimic acid using ATP as a cosubstrate. This is Shikimate kinase from Aliivibrio salmonicida (strain LFI1238) (Vibrio salmonicida (strain LFI1238)).